A 235-amino-acid polypeptide reads, in one-letter code: Large ribosomal subunit protein uL1 (235 aa).

It belongs to the universal ribosomal protein uL1 family. In terms of assembly, part of the 50S ribosomal subunit.

In terms of biological role, binds directly to 23S rRNA. The L1 stalk is quite mobile in the ribosome, and is involved in E site tRNA release. Protein L1 is also a translational repressor protein, it controls the translation of the L11 operon by binding to its mRNA. This chain is Large ribosomal subunit protein uL1, found in Micrococcus luteus (strain ATCC 4698 / DSM 20030 / JCM 1464 / CCM 169 / CCUG 5858 / IAM 1056 / NBRC 3333 / NCIMB 9278 / NCTC 2665 / VKM Ac-2230) (Micrococcus lysodeikticus).